A 907-amino-acid chain; its full sequence is Protein translocase subunit SecA (907 aa).

ATP is bound by residues glutamine 87, 105–109 (GEGKT), and aspartate 512. Residues 869–897 (AESLSAHTPVVREGEKVGRNDPCPCGSGR) are disordered. The segment covering 878–887 (VVREGEKVGR) has biased composition (basic and acidic residues). The Zn(2+) site is built by cysteine 891, cysteine 893, cysteine 902, and histidine 903.

It belongs to the SecA family. As to quaternary structure, monomer and homodimer. Part of the essential Sec protein translocation apparatus which comprises SecA, SecYEG and auxiliary proteins SecDF-YajC and YidC. The cofactor is Zn(2+).

It is found in the cell inner membrane. Its subcellular location is the cytoplasm. The enzyme catalyses ATP + H2O + cellular proteinSide 1 = ADP + phosphate + cellular proteinSide 2.. Functionally, part of the Sec protein translocase complex. Interacts with the SecYEG preprotein conducting channel. Has a central role in coupling the hydrolysis of ATP to the transfer of proteins into and across the cell membrane, serving both as a receptor for the preprotein-SecB complex and as an ATP-driven molecular motor driving the stepwise translocation of polypeptide chains across the membrane. The sequence is that of Protein translocase subunit SecA from Shewanella sediminis (strain HAW-EB3).